A 201-amino-acid chain; its full sequence is FMN-dependent NADH:quinone oxidoreductase (201 aa).

FMN is bound by residues serine 10, 16-18 (SQS), 96-99 (MYNF), and 140-143 (SRGG).

It belongs to the azoreductase type 1 family. As to quaternary structure, homodimer. It depends on FMN as a cofactor.

It carries out the reaction 2 a quinone + NADH + H(+) = 2 a 1,4-benzosemiquinone + NAD(+). The enzyme catalyses N,N-dimethyl-1,4-phenylenediamine + anthranilate + 2 NAD(+) = 2-(4-dimethylaminophenyl)diazenylbenzoate + 2 NADH + 2 H(+). Functionally, quinone reductase that provides resistance to thiol-specific stress caused by electrophilic quinones. Also exhibits azoreductase activity. Catalyzes the reductive cleavage of the azo bond in aromatic azo compounds to the corresponding amines. In Citrobacter koseri (strain ATCC BAA-895 / CDC 4225-83 / SGSC4696), this protein is FMN-dependent NADH:quinone oxidoreductase.